A 458-amino-acid chain; its full sequence is Pentatricopeptide repeat-containing protein At1g77405 (458 aa).

7 PPR repeats span residues 164 to 198 (TTASITCLMKCLGEEGFVKEALATFYRMKEYHCKP), 199 to 233 (DVYAYNTIINALCRVGNFKKARFLLDQMQLPGFRY), 236 to 271 (DTYTYTILISSYCRYGMQTGCRKAIRRRMWEANRMF), 282 to 316 (DVVTYNCLIDGCCKTNRIGRALELFEDMKTKGCVP), 317 to 351 (NQVTYNSFIRYYSVTNEIEGAIEMMRTMKKLGHGV), 353 to 387 (GSSTYTPLIHALVETRRAAEARDLVVEMVEAGLVP), and 388 to 419 (REYTYKLVCDALSSEGLASTLDEELHKRMREG).

Belongs to the PPR family. P subfamily.

The polypeptide is Pentatricopeptide repeat-containing protein At1g77405 (Arabidopsis thaliana (Mouse-ear cress)).